The following is a 522-amino-acid chain: 3-octaprenyl-4-hydroxybenzoate carboxy-lyase (522 aa).

Asn181 is a binding site for Mn(2+). Prenylated FMN is bound by residues 184 to 186 (IYR), 198 to 200 (RWL), and 203 to 204 (RG). Glu247 serves as a coordination point for Mn(2+). The active-site Proton donor is the Asp322.

The protein belongs to the UbiD family. Homohexamer. Prenylated FMN is required as a cofactor. Mn(2+) serves as cofactor.

It localises to the cell membrane. The enzyme catalyses a 4-hydroxy-3-(all-trans-polyprenyl)benzoate + H(+) = a 2-(all-trans-polyprenyl)phenol + CO2. It participates in cofactor biosynthesis; ubiquinone biosynthesis. Catalyzes the decarboxylation of 3-octaprenyl-4-hydroxy benzoate to 2-octaprenylphenol, an intermediate step in ubiquinone biosynthesis. The polypeptide is 3-octaprenyl-4-hydroxybenzoate carboxy-lyase (Paraburkholderia xenovorans (strain LB400)).